The sequence spans 229 residues: MSELTKTEKRAVILLSGGLDSATVVAMARAEGYVCYTMSFDYGQRHRAELDAAARVAGDLGAVEHKVIGLNLNGIGGSALTDSSIAVPESPSEGIPVTYVPARNTVFLSLALGWAEVLGARDIFIGVNAVDYSGYPDCRPEFVESFERMANLATKAGVEGQGFTIRAPLQNLSKSDIVKAGTALGVDYSLTVSCYQADDQGRACGKCDSCRLRAEGFTAAGIADPTRYF.

15–25 (LSGGLDSATVV) serves as a coordination point for ATP. The Zn(2+) site is built by Cys-194, Cys-204, Cys-207, and Cys-210.

The protein belongs to the QueC family. Zn(2+) is required as a cofactor.

The enzyme catalyses 7-carboxy-7-deazaguanine + NH4(+) + ATP = 7-cyano-7-deazaguanine + ADP + phosphate + H2O + H(+). The protein operates within purine metabolism; 7-cyano-7-deazaguanine biosynthesis. Catalyzes the ATP-dependent conversion of 7-carboxy-7-deazaguanine (CDG) to 7-cyano-7-deazaguanine (preQ(0)). This is 7-cyano-7-deazaguanine synthase from Pseudomonas syringae pv. syringae (strain B728a).